Here is a 329-residue protein sequence, read N- to C-terminus: uncharacterized protein (329 aa).

The next 7 membrane-spanning stretches (helical) occupy residues 29-49, 78-98, 120-140, 164-184, 217-237, 260-280, and 299-319; these read IVLW…AISH, VLVA…CWMG, KKWL…SLLV, WMIG…LIYL, YFFL…LLVI, FFWT…SFIV, and GSSL…LLFI.

The protein to M.pneumoniae MPN_129.

The protein resides in the cell membrane. This is an uncharacterized protein from Mycoplasma pneumoniae (strain ATCC 29342 / M129 / Subtype 1) (Mycoplasmoides pneumoniae).